The sequence spans 288 residues: UPF0276 protein VP3015 (288 aa).

Belongs to the UPF0276 family.

This chain is UPF0276 protein VP3015, found in Vibrio parahaemolyticus serotype O3:K6 (strain RIMD 2210633).